The chain runs to 351 residues: Ferredoxin--NADP reductase (351 aa).

Asp44, Gln52, Tyr57, Ile97, Phe132, Asp296, and Ser337 together coordinate FAD.

The protein belongs to the ferredoxin--NADP reductase type 2 family. As to quaternary structure, homodimer. It depends on FAD as a cofactor.

It carries out the reaction 2 reduced [2Fe-2S]-[ferredoxin] + NADP(+) + H(+) = 2 oxidized [2Fe-2S]-[ferredoxin] + NADPH. The sequence is that of Ferredoxin--NADP reductase from Burkholderia vietnamiensis (strain G4 / LMG 22486) (Burkholderia cepacia (strain R1808)).